The chain runs to 469 residues: Glutamate--tRNA ligase (469 aa).

A 'HIGH' region motif is present at residues 9 to 19 (PSPTGFLHVGG). Zn(2+)-binding residues include C98, C100, C125, and D127. Residues 236–240 (KLSKR) carry the 'KMSKS' region motif. K239 contacts ATP.

The protein belongs to the class-I aminoacyl-tRNA synthetase family. Glutamate--tRNA ligase type 1 subfamily. In terms of assembly, monomer. Zn(2+) serves as cofactor.

It localises to the cytoplasm. The enzyme catalyses tRNA(Glu) + L-glutamate + ATP = L-glutamyl-tRNA(Glu) + AMP + diphosphate. Functionally, catalyzes the attachment of glutamate to tRNA(Glu) in a two-step reaction: glutamate is first activated by ATP to form Glu-AMP and then transferred to the acceptor end of tRNA(Glu). In Shewanella loihica (strain ATCC BAA-1088 / PV-4), this protein is Glutamate--tRNA ligase.